A 168-amino-acid chain; its full sequence is Large ribosomal subunit protein uL10 (168 aa).

It belongs to the universal ribosomal protein uL10 family. Part of the ribosomal stalk of the 50S ribosomal subunit. The N-terminus interacts with L11 and the large rRNA to form the base of the stalk. The C-terminus forms an elongated spine to which L12 dimers bind in a sequential fashion forming a multimeric L10(L12)X complex.

Its function is as follows. Forms part of the ribosomal stalk, playing a central role in the interaction of the ribosome with GTP-bound translation factors. This is Large ribosomal subunit protein uL10 (rplJ) from Mycoplasmopsis pulmonis (strain UAB CTIP) (Mycoplasma pulmonis).